Consider the following 1993-residue polypeptide: [F-actin]-monooxygenase MICAL3 (1993 aa).

A monooxygenase domain region spans residues glutamate 2–lysine 494. Residues cysteine 97, glutamate 116–arginine 118, arginine 123–asparagine 125, phenylalanine 183, tyrosine 298, and aspartate 398 each bind FAD. Residues valine 518 to lysine 624 form the Calponin-homology (CH) domain. Serine 649 carries the post-translational modification Phosphoserine. The tract at residues glycine 658–valine 704 is disordered. Over residues aspartate 669 to glycine 679 the composition is skewed to basic and acidic residues. Phosphoserine occurs at positions 685 and 687. The LIM zinc-binding domain occupies aspartate 762–glycine 824. 8 residues coordinate Zn(2+): cysteine 764, cysteine 767, histidine 785, cysteine 788, cysteine 791, cysteine 794, cysteine 814, and histidine 817. The interval asparagine 854–glycine 886 is disordered. Positions alanine 860–asparagine 873 are enriched in polar residues. Threonine 887 bears the Phosphothreonine mark. 4 disordered regions span residues glutamate 905 to glutamine 1023, tryptophan 1039 to proline 1309, isoleucine 1332 to proline 1546, and lysine 1559 to lysine 1837. Residues serine 938 to aspartate 951 are compositionally biased toward acidic residues. Residues glycine 975–glutamate 988 are compositionally biased toward basic and acidic residues. Serine 977 is modified (phosphoserine). Residues proline 989–serine 1014 show a composition bias toward acidic residues. Residues tryptophan 1039–methionine 1051 show a composition bias toward basic and acidic residues. Acidic residues predominate over residues aspartate 1065 to proline 1090. Basic and acidic residues predominate over residues glutamate 1111–glycine 1148. Serine 1131 and serine 1187 each carry phosphoserine. The segment covering leucine 1199 to lysine 1212 has biased composition (basic and acidic residues). The segment covering serine 1230–proline 1239 has biased composition (polar residues). Pro residues predominate over residues proline 1245–glutamine 1255. Over residues proline 1257–lysine 1275 the composition is skewed to polar residues. Phosphoserine is present on serine 1272. Threonine 1274 bears the Phosphothreonine mark. Phosphoserine occurs at positions 1276 and 1335. Threonine 1339 carries the post-translational modification Phosphothreonine. 2 positions are modified to phosphoserine: serine 1369 and serine 1382. The span at proline 1405–leucine 1420 shows a compositional bias: basic and acidic residues. Residues serine 1421–serine 1433 show a composition bias toward low complexity. Phosphoserine is present on serine 1431. Residues asparagine 1434–threonine 1452 show a composition bias toward polar residues. Position 1452 is a phosphothreonine (threonine 1452). The segment covering proline 1454–glutamate 1465 has biased composition (pro residues). The span at serine 1516–tyrosine 1530 shows a compositional bias: acidic residues. Residues glutamate 1584 to valine 1600 are compositionally biased toward basic and acidic residues. Polar residues predominate over residues serine 1623–glycine 1633. Phosphoserine is present on serine 1640. Low complexity predominate over residues serine 1665–glycine 1685. Residues lysine 1686 to lysine 1704 show a composition bias toward basic residues. 2 positions are modified to phosphoserine: serine 1692 and serine 1695. The span at threonine 1754–serine 1763 shows a compositional bias: polar residues. Over residues isoleucine 1795–threonine 1811 the composition is skewed to basic and acidic residues. The stretch at alanine 1817–methionine 1983 forms a coiled coil. Basic residues predominate over residues leucine 1819–glutamine 1830. In terms of domain architecture, bMERB spans lysine 1832 to alanine 1981. Residue serine 1903 is modified to Phosphoserine.

This sequence belongs to the Mical family. As to quaternary structure, interacts with RAB1B, RAB8A, RAB10, RAB13 and RAB15 (in their GTP-bound forms); binding to RAB1B is of low affinity compared to other Rab proteins; at least in case of RAB8A can bind 2 molecules of RAB8A simultaneously through a high and a low affinity binding site, respectively. Interacts with ERC1 and RAB8A; may bridge ERC1 with RAB8A. Interacts with KIF23 and ERC1; enhances the interaction between KIF23 and ERC1. Interacts with NINL. Requires FAD as cofactor.

Its subcellular location is the cytoplasm. The protein resides in the cell cortex. It is found in the cytoskeleton. The protein localises to the nucleus. It localises to the midbody. Its subcellular location is the spindle. The protein resides in the cilium basal body. It catalyses the reaction L-methionyl-[F-actin] + NADPH + O2 + H(+) = L-methionyl-(R)-S-oxide-[F-actin] + NADP(+) + H2O. In terms of biological role, monooxygenase that promotes depolymerization of F-actin by mediating oxidation of specific methionine residues on actin to form methionine-sulfoxide, resulting in actin filament disassembly and preventing repolymerization. In the absence of actin, it also functions as a NADPH oxidase producing H(2)O(2). Seems to act as Rab effector protein and play a role in vesicle trafficking. Involved in exocytic vesicles tethering and fusion: the monooxygenase activity is required for this process and implicates RAB8A associated with exocytotic vesicles. Required for cytokinesis. Contributes to stabilization and/or maturation of the intercellular bridge independently of its monooxygenase activity. Promotes recruitment of Rab8 and ERC1 to the intercellular bridge, and together these proteins are proposed to function in timely abscission. This chain is [F-actin]-monooxygenase MICAL3 (Mical3), found in Mus musculus (Mouse).